Consider the following 256-residue polypeptide: Ribonuclease HII (256 aa).

An RNase H type-2 domain is found at 67-255; it reads QLVGGVDEVG…VSEMVGLKKA (189 aa). A divalent metal cation-binding residues include D73, E74, and D165.

It belongs to the RNase HII family. The cofactor is Mn(2+). Mg(2+) serves as cofactor.

It is found in the cytoplasm. The enzyme catalyses Endonucleolytic cleavage to 5'-phosphomonoester.. In terms of biological role, endonuclease that specifically degrades the RNA of RNA-DNA hybrids. The chain is Ribonuclease HII from Lactobacillus delbrueckii subsp. bulgaricus (strain ATCC 11842 / DSM 20081 / BCRC 10696 / JCM 1002 / NBRC 13953 / NCIMB 11778 / NCTC 12712 / WDCM 00102 / Lb 14).